A 292-amino-acid chain; its full sequence is Elongation factor Ts (292 aa).

Residues 80–83 (TDFV) form an involved in Mg(2+) ion dislocation from EF-Tu region.

Belongs to the EF-Ts family.

The protein resides in the cytoplasm. Associates with the EF-Tu.GDP complex and induces the exchange of GDP to GTP. It remains bound to the aminoacyl-tRNA.EF-Tu.GTP complex up to the GTP hydrolysis stage on the ribosome. The chain is Elongation factor Ts from Cupriavidus necator (strain ATCC 17699 / DSM 428 / KCTC 22496 / NCIMB 10442 / H16 / Stanier 337) (Ralstonia eutropha).